The chain runs to 289 residues: Protoheme IX farnesyltransferase (289 aa).

A run of 9 helical transmembrane segments spans residues 9–29 (VALMKLRVVELLLITTVPVMM), 35–55 (MPSLWLIAVTLVAGTLAAGSA), 89–109 (LTFGIVIGIVSTLMFGLLVNW), 110–130 (PSALLADGAIAFYVFVYTLGL), 138–158 (IVIGGAAGCFPVLIGWSAVTG), 164–184 (AVLLFAVVFFWTPPHFWALAM), 188–208 (DDYAAAGIPMLPVVAPVEVVT), 228–248 (VAHTGPVYLVSAVVVGAWFLA), and 269–289 (FHMSITYLTLLFVAIAVTAVV).

It belongs to the UbiA prenyltransferase family. Protoheme IX farnesyltransferase subfamily.

It localises to the cell membrane. The enzyme catalyses heme b + (2E,6E)-farnesyl diphosphate + H2O = Fe(II)-heme o + diphosphate. The protein operates within porphyrin-containing compound metabolism; heme O biosynthesis; heme O from protoheme: step 1/1. Its function is as follows. Converts heme B (protoheme IX) to heme O by substitution of the vinyl group on carbon 2 of heme B porphyrin ring with a hydroxyethyl farnesyl side group. The protein is Protoheme IX farnesyltransferase of Frankia alni (strain DSM 45986 / CECT 9034 / ACN14a).